The chain runs to 196 residues: Mpv17-like protein (196 aa).

Topologically, residues 1 to 16 are cytoplasmic; the sequence is MVSWWQALTRAAGRYP. The interval 16–55 is targeting to peroxisomes; the sequence is PWPANVLLYAGFFSGGDALQQVLRGGPADWQHTRHVATVA. Residues 17–34 traverse the membrane as a helical segment; the sequence is WPANVLLYAGFFSGGDAL. The Lumenal segment spans residues 35-50; that stretch reads QQVLRGGPADWQHTRH. The chain crosses the membrane as a helical span at residues 51-67; it reads VATVAVAFHANLNYVWL. Topologically, residues 68 to 90 are cytoplasmic; it reads NLLERALPGRAPRTILAKVLCDQ. A helical membrane pass occupies residues 91 to 108; the sequence is ALGGPVYVSTFYAGMSIL. At 109-150 the chain is on the lumenal side; the sequence is QGKDDIFLDMRQKFWNTYKSGLMYWPFVQLINFSLIPIRWRT. The helical transmembrane segment at 151 to 167 threads the bilayer; sequence AYTGLCGFLWATFLCFS. Over 168 to 196 the chain is Cytoplasmic; the sequence is QQEGDGTFKSAFTFRRIKVTNEVEKPSEK.

Belongs to the peroxisomal membrane protein PXMP2/4 family.

The protein localises to the peroxisome membrane. Participates in reactive oxygen species metabolism by up- or down-regulation of the genes of antioxidant enzymes. Protective against the mitochondrial apoptotic cascade. This chain is Mpv17-like protein (MPV17L), found in Bos taurus (Bovine).